Consider the following 335-residue polypeptide: MKNLILAIESSCDDSSIAIIDKNTLECKFHKKISQELDHSIYGGVVPELAARLHSEALPKILKQCKEHFKNLCAIAVTNEPGLSVSLLSGISMAKTLASALNLPLIPINHLKGHIYSLFLEEKISLDMGILLVSGGHTMVLYLKDDANLELLASTNDDSFGESFDKVAKMMNLGYPGGVIIENLAKNAKLKNISFNIPLKHSKELAYSFSGLKNAVRLEILKHENLSDEIKAEIAYAFENTACDHIMDKLEKIFNLYKFKNFGVVGGASANLHLRSRLQNLCQKYNANLKLAPLKFCSDNALMIARAAVDAYKKKEFVSIEEDILSPKNKNFSRI.

Residues histidine 110 and histidine 114 each contribute to the Fe cation site. Substrate-binding positions include 132-136 (LVSGG), aspartate 165, glycine 178, and asparagine 271. Fe cation is bound at residue aspartate 299.

The protein belongs to the KAE1 / TsaD family. Requires Fe(2+) as cofactor.

It localises to the cytoplasm. The catalysed reaction is L-threonylcarbamoyladenylate + adenosine(37) in tRNA = N(6)-L-threonylcarbamoyladenosine(37) in tRNA + AMP + H(+). Functionally, required for the formation of a threonylcarbamoyl group on adenosine at position 37 (t(6)A37) in tRNAs that read codons beginning with adenine. Is involved in the transfer of the threonylcarbamoyl moiety of threonylcarbamoyl-AMP (TC-AMP) to the N6 group of A37, together with TsaE and TsaB. TsaD likely plays a direct catalytic role in this reaction. The polypeptide is tRNA N6-adenosine threonylcarbamoyltransferase (Campylobacter jejuni subsp. jejuni serotype O:6 (strain 81116 / NCTC 11828)).